Here is a 450-residue protein sequence, read N- to C-terminus: Probable ECA polymerase (450 aa).

11 helical membrane passes run 6–26, 37–57, 63–83, 118–138, 155–175, 181–201, 207–227, 228–248, 341–361, 378–398, and 410–430; these read FSGL…LTWF, VFFS…TSVL, VGVA…CFYA, VILM…NGFL, GVAL…VYFL, AWLF…MIVG, IIIA…ISLW, MLAA…LKRY, LVVM…GLII, YKAA…IVLA, and VFFI…YWLF.

Belongs to the WzyE family. Probably part of a complex composed of WzxE, WzyE and WzzE.

Its subcellular location is the cell inner membrane. The protein operates within bacterial outer membrane biogenesis; enterobacterial common antigen biosynthesis. Its function is as follows. Probably involved in the polymerization of enterobacterial common antigen (ECA) trisaccharide repeat units. The polypeptide is Probable ECA polymerase (Escherichia coli O139:H28 (strain E24377A / ETEC)).